A 395-amino-acid polypeptide reads, in one-letter code: Probable L-tyrosine/L-aspartate decarboxylase (395 aa).

N6-(pyridoxal phosphate)lysine is present on Lys-242.

This sequence belongs to the group II decarboxylase family. MfnA subfamily. Pyridoxal 5'-phosphate is required as a cofactor.

The enzyme catalyses L-tyrosine + H(+) = tyramine + CO2. It carries out the reaction L-aspartate + H(+) = beta-alanine + CO2. The protein operates within cofactor biosynthesis; methanofuran biosynthesis. It functions in the pathway cofactor biosynthesis; coenzyme A biosynthesis. Its function is as follows. Catalyzes the decarboxylation of L-tyrosine to produce tyramine for methanofuran biosynthesis. Can also catalyze the decarboxylation of L-aspartate to produce beta-alanine for coenzyme A (CoA) biosynthesis. The chain is Probable L-tyrosine/L-aspartate decarboxylase from Methanosarcina acetivorans (strain ATCC 35395 / DSM 2834 / JCM 12185 / C2A).